The chain runs to 445 residues: Phosphoglucosamine mutase (445 aa).

Catalysis depends on Ser99, which acts as the Phosphoserine intermediate. Residues Ser99, Asp242, Asp244, and Asp246 each contribute to the Mg(2+) site. A Phosphoserine modification is found at Ser99.

It belongs to the phosphohexose mutase family. Mg(2+) is required as a cofactor. Post-translationally, activated by phosphorylation.

It catalyses the reaction alpha-D-glucosamine 1-phosphate = D-glucosamine 6-phosphate. Functionally, catalyzes the conversion of glucosamine-6-phosphate to glucosamine-1-phosphate. The polypeptide is Phosphoglucosamine mutase (Campylobacter jejuni (strain RM1221)).